The sequence spans 70 residues: ATP synthase subunit c (70 aa).

Helical transmembrane passes span Ile-4–Ile-24 and Ile-45–Phe-65.

It belongs to the ATPase C chain family. In terms of assembly, F-type ATPases have 2 components, F(1) - the catalytic core - and F(0) - the membrane proton channel. F(1) has five subunits: alpha(3), beta(3), gamma(1), delta(1), epsilon(1). F(0) has three main subunits: a(1), b(2) and c(10-14). The alpha and beta chains form an alternating ring which encloses part of the gamma chain. F(1) is attached to F(0) by a central stalk formed by the gamma and epsilon chains, while a peripheral stalk is formed by the delta and b chains.

Its subcellular location is the cell membrane. In terms of biological role, f(1)F(0) ATP synthase produces ATP from ADP in the presence of a proton or sodium gradient. F-type ATPases consist of two structural domains, F(1) containing the extramembraneous catalytic core and F(0) containing the membrane proton channel, linked together by a central stalk and a peripheral stalk. During catalysis, ATP synthesis in the catalytic domain of F(1) is coupled via a rotary mechanism of the central stalk subunits to proton translocation. Key component of the F(0) channel; it plays a direct role in translocation across the membrane. A homomeric c-ring of between 10-14 subunits forms the central stalk rotor element with the F(1) delta and epsilon subunits. The protein is ATP synthase subunit c of Staphylococcus haemolyticus (strain JCSC1435).